Here is a 387-residue protein sequence, read N- to C-terminus: 3-ketoacyl-CoA thiolase (387 aa).

The Acyl-thioester intermediate role is filled by C91. Catalysis depends on proton acceptor residues H343 and C373.

The protein belongs to the thiolase-like superfamily. Thiolase family. Heterotetramer of two alpha chains (FadB) and two beta chains (FadA).

The protein resides in the cytoplasm. The catalysed reaction is an acyl-CoA + acetyl-CoA = a 3-oxoacyl-CoA + CoA. Its pathway is lipid metabolism; fatty acid beta-oxidation. In terms of biological role, catalyzes the final step of fatty acid oxidation in which acetyl-CoA is released and the CoA ester of a fatty acid two carbons shorter is formed. The chain is 3-ketoacyl-CoA thiolase from Escherichia coli O139:H28 (strain E24377A / ETEC).